A 607-amino-acid chain; its full sequence is UvrABC system protein C (607 aa).

The 80-residue stretch at 15–94 folds into the GIY-YIG domain; that stretch reads ENPGVYLMKN…IKRHRPYFNV (80 aa). Residues 204–239 enclose the UVR domain; sequence DQVLKLLIRLMNEASARLDYETAALRRDQIASIKEV.

This sequence belongs to the UvrC family. In terms of assembly, interacts with UvrB in an incision complex.

It localises to the cytoplasm. In terms of biological role, the UvrABC repair system catalyzes the recognition and processing of DNA lesions. UvrC both incises the 5' and 3' sides of the lesion. The N-terminal half is responsible for the 3' incision and the C-terminal half is responsible for the 5' incision. This is UvrABC system protein C from Dehalococcoides mccartyi (strain ATCC BAA-2100 / JCM 16839 / KCTC 5957 / BAV1).